The primary structure comprises 278 residues: Putative cysteine-rich repeat secretory protein 19 (278 aa).

An N-terminal signal peptide occupies residues 1 to 32 (MYSSSSVSKRFVLVPIVVVVTTQLLLVRNVSS). 2 consecutive Gnk2-homologous domains span residues 39–147 (YLHH…SLDT) and 160–267 (PSAK…LYPF).

This sequence belongs to the cysteine-rich repeat secretory protein family.

The protein resides in the secreted. This is Putative cysteine-rich repeat secretory protein 19 (CRRSP19) from Arabidopsis thaliana (Mouse-ear cress).